We begin with the raw amino-acid sequence, 609 residues long: Glutamine--fructose-6-phosphate aminotransferase [isomerizing] (609 aa).

Residue C2 is the Nucleophile; for GATase activity of the active site. One can recognise a Glutamine amidotransferase type-2 domain in the interval 2–217 (CGIVGAIAGR…EGDTAELRRD (216 aa)). SIS domains follow at residues 284-425 (TADA…LQGR) and 458-599 (WAER…VDKP). K604 (for Fru-6P isomerization activity) is an active-site residue.

In terms of assembly, homodimer.

It is found in the cytoplasm. The catalysed reaction is D-fructose 6-phosphate + L-glutamine = D-glucosamine 6-phosphate + L-glutamate. Its function is as follows. Catalyzes the first step in hexosamine metabolism, converting fructose-6P into glucosamine-6P using glutamine as a nitrogen source. This is Glutamine--fructose-6-phosphate aminotransferase [isomerizing] from Xanthomonas campestris pv. campestris (strain ATCC 33913 / DSM 3586 / NCPPB 528 / LMG 568 / P 25).